A 377-amino-acid polypeptide reads, in one-letter code: NADH dehydrogenase [ubiquinone] 1 alpha subcomplex subunit 9, mitochondrial (377 aa).

Residues M1 to Q35 constitute a mitochondrion transit peptide. Position 175 is an N6-succinyllysine (K175). N6-acetyllysine is present on residues K189 and K370.

The protein belongs to the complex I NDUFA9 subunit family. In terms of assembly, complex I is composed of 45 different subunits. This a component of the hydrophobic protein fraction. Interacts with BLOC1S1. Interacts with SLC2A4. Interacts with CLOCK. Interacts with RAB5IF. It depends on FAD as a cofactor. In terms of processing, acetylated on lysine residues. BLOC1S1 is required for acetylation. Acetylated by CLOCK in a circadian manner.

It is found in the mitochondrion matrix. Accessory subunit of the mitochondrial membrane respiratory chain NADH dehydrogenase (Complex I), that is believed not to be involved in catalysis. Required for proper complex I assembly. Complex I functions in the transfer of electrons from NADH to the respiratory chain. The immediate electron acceptor for the enzyme is believed to be ubiquinone. The polypeptide is NADH dehydrogenase [ubiquinone] 1 alpha subcomplex subunit 9, mitochondrial (NDUFA9) (Homo sapiens (Human)).